The sequence spans 482 residues: Pyruvate kinase (482 aa).

A substrate-binding site is contributed by Arg-37. K(+) is bound by residues Asn-39, Ser-41, and Asp-71. 39-42 (NFSH) lines the ATP pocket. Residues Arg-78 and Lys-160 each coordinate ATP. A Mg(2+)-binding site is contributed by Glu-222. 3 residues coordinate substrate: Gly-245, Asp-246, and Thr-278. Position 246 (Asp-246) interacts with Mg(2+).

The protein belongs to the pyruvate kinase family. In terms of assembly, homotetramer. Requires Mg(2+) as cofactor. K(+) is required as a cofactor.

It carries out the reaction pyruvate + ATP = phosphoenolpyruvate + ADP + H(+). The protein operates within carbohydrate degradation; glycolysis; pyruvate from D-glyceraldehyde 3-phosphate: step 5/5. The chain is Pyruvate kinase (ttuE) from Agrobacterium vitis (Rhizobium vitis).